Reading from the N-terminus, the 144-residue chain is Maximins 9/H3 (144 aa).

The N-terminal stretch at 1-18 is a signal peptide; sequence MNFKYIVAVSFLIASAYA. Positions 19 to 43 are excised as a propeptide; that stretch reads RSVKNDEQSLSQRDVLEEESLREIR. The residue at position 70 (tyrosine 70) is a Tyrosine amide. A propeptide spanning residues 74–123 is cleaved from the precursor; it reads TAEEHEVMKRLEAIMRDLDSLDHPEEASERETRGFNQDEIANLFTKKEKR. Isoleucine 143 carries the isoleucine amide modification.

It belongs to the bombinin family. Expressed by the skin glands.

The protein localises to the secreted. Maximin-9 shows antimicrobial activity against bacteria and against the fungus C.albicans. It has little hemolytic activity. Functionally, maximin-H3 shows antibacterial activity against both Gram-positive and Gram-negative bacteria. It also shows antimicrobial activity against the fungus C.albicans. Shows strong hemolytic activity. In Bombina maxima (Giant fire-bellied toad), this protein is Maximins 9/H3.